A 354-amino-acid chain; its full sequence is Uroporphyrinogen decarboxylase (354 aa).

Substrate contacts are provided by residues 27 to 31 (RQAGR), F46, D77, Y153, T208, and H326.

The protein belongs to the uroporphyrinogen decarboxylase family. Homodimer.

Its subcellular location is the cytoplasm. It carries out the reaction uroporphyrinogen III + 4 H(+) = coproporphyrinogen III + 4 CO2. The protein operates within porphyrin-containing compound metabolism; protoporphyrin-IX biosynthesis; coproporphyrinogen-III from 5-aminolevulinate: step 4/4. Functionally, catalyzes the decarboxylation of four acetate groups of uroporphyrinogen-III to yield coproporphyrinogen-III. The polypeptide is Uroporphyrinogen decarboxylase (Neisseria meningitidis serogroup A / serotype 4A (strain DSM 15465 / Z2491)).